The sequence spans 226 residues: ATP synthase F(0) complex subunit a (226 aa).

A run of 6 helical transmembrane segments spans residues 5 to 25, 68 to 88, 97 to 117, 136 to 156, 179 to 199, and 201 to 221; these read LFAP…LIII, WSLM…LGML, QLSM…ATGF, FLIP…PVAL, LVLM…LALL, and ILEF…VSLY.

Belongs to the ATPase A chain family. As to quaternary structure, component of the ATP synthase complex composed at least of ATP5F1A/subunit alpha, ATP5F1B/subunit beta, ATP5MC1/subunit c (homooctomer), MT-ATP6/subunit a, MT-ATP8/subunit 8, ATP5ME/subunit e, ATP5MF/subunit f, ATP5MG/subunit g, ATP5MK/subunit k, ATP5MJ/subunit j, ATP5F1C/subunit gamma, ATP5F1D/subunit delta, ATP5F1E/subunit epsilon, ATP5PF/subunit F6, ATP5PB/subunit b, ATP5PD/subunit d, ATP5PO/subunit OSCP. ATP synthase complex consists of a soluble F(1) head domain (subunits alpha(3) and beta(3)) - the catalytic core - and a membrane F(0) domain - the membrane proton channel (subunits c, a, 8, e, f, g, k and j). These two domains are linked by a central stalk (subunits gamma, delta, and epsilon) rotating inside the F1 region and a stationary peripheral stalk (subunits F6, b, d, and OSCP). Interacts with DNAJC30; interaction is direct.

The protein resides in the mitochondrion inner membrane. The enzyme catalyses H(+)(in) = H(+)(out). In terms of biological role, subunit a, of the mitochondrial membrane ATP synthase complex (F(1)F(0) ATP synthase or Complex V) that produces ATP from ADP in the presence of a proton gradient across the membrane which is generated by electron transport complexes of the respiratory chain. ATP synthase complex consist of a soluble F(1) head domain - the catalytic core - and a membrane F(1) domain - the membrane proton channel. These two domains are linked by a central stalk rotating inside the F(1) region and a stationary peripheral stalk. During catalysis, ATP synthesis in the catalytic domain of F(1) is coupled via a rotary mechanism of the central stalk subunits to proton translocation. With the subunit c (ATP5MC1), forms the proton-conducting channel in the F(0) domain, that contains two crucial half-channels (inlet and outlet) that facilitate proton movement from the mitochondrial intermembrane space (IMS) into the matrix. Protons are taken up via the inlet half-channel and released through the outlet half-channel, following a Grotthuss mechanism. The protein is ATP synthase F(0) complex subunit a of Balaenoptera musculus (Blue whale).